The chain runs to 309 residues: NAD kinase (309 aa).

Catalysis depends on aspartate 89, which acts as the Proton acceptor. Residues 89 to 90 (DG), 163 to 164 (NE), histidine 174, arginine 191, aspartate 193, and 204 to 209 (TAYALS) contribute to the NAD(+) site.

It belongs to the NAD kinase family. Requires a divalent metal cation as cofactor.

The protein resides in the cytoplasm. The catalysed reaction is NAD(+) + ATP = ADP + NADP(+) + H(+). Involved in the regulation of the intracellular balance of NAD and NADP, and is a key enzyme in the biosynthesis of NADP. Catalyzes specifically the phosphorylation on 2'-hydroxyl of the adenosine moiety of NAD to yield NADP. The protein is NAD kinase of Shewanella sp. (strain W3-18-1).